A 243-amino-acid polypeptide reads, in one-letter code: Pyridoxine 5'-phosphate synthase (243 aa).

Residue N9 participates in 3-amino-2-oxopropyl phosphate binding. Residue 11–12 (DH) participates in 1-deoxy-D-xylulose 5-phosphate binding. Position 20 (R20) interacts with 3-amino-2-oxopropyl phosphate. The active-site Proton acceptor is H45. 1-deoxy-D-xylulose 5-phosphate contacts are provided by R47 and H52. E72 acts as the Proton acceptor in catalysis. T102 contacts 1-deoxy-D-xylulose 5-phosphate. The active-site Proton donor is H193. 3-amino-2-oxopropyl phosphate contacts are provided by residues G194 and 215-216 (GH).

This sequence belongs to the PNP synthase family. Homooctamer; tetramer of dimers.

Its subcellular location is the cytoplasm. It carries out the reaction 3-amino-2-oxopropyl phosphate + 1-deoxy-D-xylulose 5-phosphate = pyridoxine 5'-phosphate + phosphate + 2 H2O + H(+). Its pathway is cofactor biosynthesis; pyridoxine 5'-phosphate biosynthesis; pyridoxine 5'-phosphate from D-erythrose 4-phosphate: step 5/5. Functionally, catalyzes the complicated ring closure reaction between the two acyclic compounds 1-deoxy-D-xylulose-5-phosphate (DXP) and 3-amino-2-oxopropyl phosphate (1-amino-acetone-3-phosphate or AAP) to form pyridoxine 5'-phosphate (PNP) and inorganic phosphate. In Escherichia coli O6:H1 (strain CFT073 / ATCC 700928 / UPEC), this protein is Pyridoxine 5'-phosphate synthase.